Here is a 230-residue protein sequence, read N- to C-terminus: Glutathione S-transferase 2 (230 aa).

In terms of domain architecture, GST N-terminal spans 2–86 (AHFTLYSHAG…YLADKYDTDR (85 aa)). The 138-residue stretch at 93–230 (DDPEYYKLIQ…EELAKAKEQH (138 aa)) folds into the GST C-terminal domain.

The protein belongs to the GST superfamily.

The enzyme catalyses RX + glutathione = an S-substituted glutathione + a halide anion + H(+). Its function is as follows. Involved in the oxidative stress response and detoxification. The chain is Glutathione S-transferase 2 (gst2) from Schizosaccharomyces pombe (strain 972 / ATCC 24843) (Fission yeast).